A 122-amino-acid polypeptide reads, in one-letter code: S-adenosylmethionine decarboxylase proenzyme (122 aa).

Serine 63 serves as the catalytic Schiff-base intermediate with substrate; via pyruvic acid. Position 63 is a pyruvic acid (Ser); by autocatalysis (serine 63). Histidine 68 serves as the catalytic Proton acceptor; for processing activity. Residue cysteine 83 is the Proton donor; for catalytic activity of the active site.

It belongs to the prokaryotic AdoMetDC family. Type 1 subfamily. In terms of assembly, heterotetramer of two alpha and two beta chains arranged as a dimer of alpha/beta heterodimers. Pyruvate is required as a cofactor. Is synthesized initially as an inactive proenzyme. Formation of the active enzyme involves a self-maturation process in which the active site pyruvoyl group is generated from an internal serine residue via an autocatalytic post-translational modification. Two non-identical subunits are generated from the proenzyme in this reaction, and the pyruvate is formed at the N-terminus of the alpha chain, which is derived from the carboxyl end of the proenzyme. The post-translation cleavage follows an unusual pathway, termed non-hydrolytic serinolysis, in which the side chain hydroxyl group of the serine supplies its oxygen atom to form the C-terminus of the beta chain, while the remainder of the serine residue undergoes an oxidative deamination to produce ammonia and the pyruvoyl group blocking the N-terminus of the alpha chain.

It catalyses the reaction S-adenosyl-L-methionine + H(+) = S-adenosyl 3-(methylsulfanyl)propylamine + CO2. The protein operates within amine and polyamine biosynthesis; S-adenosylmethioninamine biosynthesis; S-adenosylmethioninamine from S-adenosyl-L-methionine: step 1/1. In terms of biological role, catalyzes the decarboxylation of S-adenosylmethionine to S-adenosylmethioninamine (dcAdoMet), the propylamine donor required for the synthesis of the polyamines spermine and spermidine from the diamine putrescine. This is S-adenosylmethionine decarboxylase proenzyme from Methanococcus vannielii (strain ATCC 35089 / DSM 1224 / JCM 13029 / OCM 148 / SB).